A 219-amino-acid polypeptide reads, in one-letter code: Protein GrpE (219 aa).

Disordered regions lie at residues 1–32 (MSTT…LDAT) and 59–87 (FDGV…AERT).

It belongs to the GrpE family. As to quaternary structure, homodimer.

Its subcellular location is the cytoplasm. In terms of biological role, participates actively in the response to hyperosmotic and heat shock by preventing the aggregation of stress-denatured proteins, in association with DnaK and GrpE. It is the nucleotide exchange factor for DnaK and may function as a thermosensor. Unfolded proteins bind initially to DnaJ; upon interaction with the DnaJ-bound protein, DnaK hydrolyzes its bound ATP, resulting in the formation of a stable complex. GrpE releases ADP from DnaK; ATP binding to DnaK triggers the release of the substrate protein, thus completing the reaction cycle. Several rounds of ATP-dependent interactions between DnaJ, DnaK and GrpE are required for fully efficient folding. This Corynebacterium diphtheriae (strain ATCC 700971 / NCTC 13129 / Biotype gravis) protein is Protein GrpE.